Consider the following 278-residue polypeptide: MEMLEEHRCFEGWQQRWRHDSSTLNCPMTFSIFLPPPRDHTPPPVLYWLSGLTCNDENFTTKAGAQRVAAELGIVLVMPDTSPRGEKVANDDGYDLGQGAGFYLNATQPPWATHYRMYDYLRDELPALVQSQFNVSDRCAISGHSMGGHGALIMALKNPGKYTSVSAFAPIVNPCSVPWGIKAFSSYLGEDKNAWLEWDSCALMYASNAQDAIPTLIDQGDNDQFLADQLQPAVLAEAARQKAWPMTLRIQPGYDHSYYFIASFIEDHLRFHAQYLLK.

Residues serine 145, aspartate 223, and histidine 256 each act as charge relay system in the active site.

This sequence belongs to the esterase D family.

The enzyme catalyses S-formylglutathione + H2O = formate + glutathione + H(+). In terms of biological role, serine hydrolase involved in the detoxification of formaldehyde. Hydrolyzes S-formylglutathione to glutathione and formate. The chain is S-formylglutathione hydrolase YeiG (yeiG) from Shigella boydii serotype 4 (strain Sb227).